Here is an 86-residue protein sequence, read N- to C-terminus: Photosystem I reaction center subunit PsaK (86 aa).

The helical transmembrane segment at 15 to 34 threads the bilayer; sequence PWSTQVAMVMITCNLLAIVA.

The protein belongs to the PsaG/PsaK family.

It is found in the plastid. The protein localises to the chloroplast thylakoid membrane. This chain is Photosystem I reaction center subunit PsaK, found in Pyropia yezoensis (Susabi-nori).